The primary structure comprises 577 residues: Aspartate--tRNA ligase (577 aa).

Glutamate 171 provides a ligand contact to L-aspartate. The aspartate stretch occupies residues 195-198 (QLFK). An L-aspartate-binding site is contributed by arginine 217. Residues 217 to 219 (RDE) and glutamine 226 contribute to the ATP site. L-aspartate is bound at residue histidine 437. Glutamate 472 lines the ATP pocket. Residue arginine 479 participates in L-aspartate binding. 524–527 (GFDR) serves as a coordination point for ATP.

It belongs to the class-II aminoacyl-tRNA synthetase family. Type 1 subfamily. As to quaternary structure, homodimer.

It is found in the cytoplasm. It catalyses the reaction tRNA(Asp) + L-aspartate + ATP = L-aspartyl-tRNA(Asp) + AMP + diphosphate. In terms of biological role, catalyzes the attachment of L-aspartate to tRNA(Asp) in a two-step reaction: L-aspartate is first activated by ATP to form Asp-AMP and then transferred to the acceptor end of tRNA(Asp). The sequence is that of Aspartate--tRNA ligase from Deinococcus geothermalis (strain DSM 11300 / CIP 105573 / AG-3a).